The following is a 307-amino-acid chain: Mediator of RNA polymerase II transcription subunit 18 (307 aa).

Residues 117–126 show a composition bias toward polar residues; that stretch reads TNFNSTNEDQ. A disordered region spans residues 117–162; that stretch reads TNFNSTNEDQNNSKHTEDTVNESRNSDDIIDVDMDASPAPSNESCS.

This sequence belongs to the Mediator complex subunit 18 family. In terms of assembly, component of the Mediator complex, which is composed of at least 21 subunits that form three structurally distinct submodules. The Mediator head module contains MED6, MED8, MED11, SRB4/MED17, SRB5/MED18, ROX3/MED19, SRB2/MED20 and SRB6/MED22, the middle module contains MED1, MED4, NUT1/MED5, MED7, CSE2/MED9, NUT2/MED10, SRB7/MED21 and SOH1/MED31, and the tail module contains MED2, PGD1/MED3, RGR1/MED14, GAL11/MED15 and SIN4/MED16. The head and the middle modules interact directly with RNA polymerase II, whereas the elongated tail module interacts with gene-specific regulatory proteins. SRB5/MED18 interacts directly with MED8 and SRB2/MED20.

Its subcellular location is the nucleus. Its function is as follows. Component of the Mediator complex, a coactivator involved in the regulated transcription of nearly all RNA polymerase II-dependent genes. Mediator functions as a bridge to convey information from gene-specific regulatory proteins to the basal RNA polymerase II transcription machinery. The Mediator complex, having a compact conformation in its free form, is recruited to promoters by direct interactions with regulatory proteins and serves for the assembly of a functional preinitiation complex with RNA polymerase II and the general transcription factors. The Mediator complex unfolds to an extended conformation and partially surrounds RNA polymerase II, specifically interacting with the unphosphorylated form of the C-terminal domain (CTD) of RNA polymerase II. The Mediator complex dissociates from the RNA polymerase II holoenzyme and stays at the promoter when transcriptional elongation begins. The protein is Mediator of RNA polymerase II transcription subunit 18 (SRB5) of Saccharomyces cerevisiae (strain ATCC 204508 / S288c) (Baker's yeast).